The chain runs to 506 residues: Cobyric acid synthase (506 aa).

The region spanning 251–448 (DITIAIVQLP…LHGLFDSDAF (198 aa)) is the GATase cobBQ-type domain. Catalysis depends on cysteine 332, which acts as the Nucleophile. Residue histidine 440 is part of the active site.

The protein belongs to the CobB/CobQ family. CobQ subfamily.

The protein operates within cofactor biosynthesis; adenosylcobalamin biosynthesis. Functionally, catalyzes amidations at positions B, D, E, and G on adenosylcobyrinic A,C-diamide. NH(2) groups are provided by glutamine, and one molecule of ATP is hydrogenolyzed for each amidation. This is Cobyric acid synthase from Salmonella heidelberg (strain SL476).